The chain runs to 46 residues: Hellethionin-D (46 aa).

4 disulfide bridges follow: C3-C40, C4-C32, C12-C30, and C16-C26.

Belongs to the plant thionin (TC 1.C.44) family. 4 C-C subfamily.

Its subcellular location is the secreted. Functionally, thionins are small plant proteins which are toxic to animal cells. They seem to exert their toxic effect at the level of the cell membrane. Their precise function is not known. The protein is Hellethionin-D of Helleborus purpurascens (Purple hellebore).